A 338-amino-acid polypeptide reads, in one-letter code: uncharacterized protein (338 aa).

Positions 1–29 (MIKQLYKNITICSLAISTALTVFPATSYA) are cleaved as a signal peptide.

The protein belongs to the aerolysin family.

This is an uncharacterized protein from Staphylococcus aureus (strain Mu50 / ATCC 700699).